We begin with the raw amino-acid sequence, 200 residues long: Recombination protein RecR (200 aa).

Residues 57–72 form a C4-type zinc finger; sequence CRQCRTLTEDDLCPQC. The Toprim domain maps to 80–175; the sequence is TLLCVVEGPM…IASRIAHGVP (96 aa).

The protein belongs to the RecR family.

In terms of biological role, may play a role in DNA repair. It seems to be involved in an RecBC-independent recombinational process of DNA repair. It may act with RecF and RecO. The chain is Recombination protein RecR from Pseudomonas fluorescens (strain Pf0-1).